The following is a 641-amino-acid chain: Fibrinogen alpha-2 chain (641 aa).

The first 23 residues, 1–23, serve as a signal peptide directing secretion; the sequence is MTLRGVSMVLTWCLLVSKAWSSG. A coiled-coil region spans residues 107–226; that stretch reads SVSDVSNQVV…IVHESFSVER (120 aa). The segment at 228–327 is disordered; it reads DARSLHPYSG…QKTEELSFKK (100 aa). Asparagine 271 is a glycosylation site (N-linked (GlcNAc...) asparagine). A compositionally biased stretch (basic and acidic residues) spans 279–289; it reads VDERSKVEKDV. Residues 293–317 show a composition bias toward low complexity; sequence STSSVSSSSSSSSSSSSTSSTISST. The 242-residue stretch at 395–636 folds into the Fibrinogen C-terminal domain; that stretch reads RTNLSEYIDC…RTAVRFRRVQ (242 aa). N-linked (GlcNAc...) asparagine glycosylation occurs at asparagine 397. Residues cysteine 404 and cysteine 435 are joined by a disulfide bond. The N-linked (GlcNAc...) asparagine glycan is linked to asparagine 458. A disulfide bridge links cysteine 571 with cysteine 584.

Heterohexamer; disulfide linked. Contains 2 sets of 3 non-identical chains (alpha, beta and gamma). The 2 heterotrimers are in head to head conformation with the N-termini in a small central domain. In terms of processing, conversion of fibrinogen to fibrin is triggered by thrombin, which cleaves fibrinopeptides A and B from alpha and beta chains, and thus exposes the N-terminal polymerization sites responsible for the formation of the soft clot. The soft clot is converted into the hard clot by factor XIIIA which catalyzes the epsilon-(gamma-glutamyl)lysine cross-linking between gamma chains (stronger) and between alpha chains (weaker) of different monomers. Forms F13A-mediated cross-links between a glutamine and the epsilon-amino group of a lysine residue, forming fibronectin-fibrinogen heteropolymers.

The protein localises to the secreted. Functionally, fibrinogen has a double function: yielding monomers that polymerize into fibrin and acting as a cofactor in platelet aggregation. This chain is Fibrinogen alpha-2 chain, found in Petromyzon marinus (Sea lamprey).